We begin with the raw amino-acid sequence, 270 residues long: 3-phenylpropionate-dihydrodiol/cinnamic acid-dihydrodiol dehydrogenase (270 aa).

10–34 (FITGGGSGLGLALVERFIEEGAQVA) is an NAD(+) binding site. Residue Ser143 participates in substrate binding. Residue Tyr156 is the Proton acceptor of the active site.

Belongs to the short-chain dehydrogenases/reductases (SDR) family.

The catalysed reaction is 3-(cis-5,6-dihydroxycyclohexa-1,3-dien-1-yl)propanoate + NAD(+) = 3-(2,3-dihydroxyphenyl)propanoate + NADH + H(+). It catalyses the reaction (2E)-3-(cis-5,6-dihydroxycyclohexa-1,3-dien-1-yl)prop-2-enoate + NAD(+) = (2E)-3-(2,3-dihydroxyphenyl)prop-2-enoate + NADH + H(+). Its pathway is aromatic compound metabolism; 3-phenylpropanoate degradation. In terms of biological role, converts 3-phenylpropionate-dihydrodiol (PP-dihydrodiol) and cinnamic acid-dihydrodiol (CI-dihydrodiol) into 3-(2,3-dihydroxylphenyl)propanoic acid (DHPP) and 2,3-dihydroxicinnamic acid (DHCI), respectively. This chain is 3-phenylpropionate-dihydrodiol/cinnamic acid-dihydrodiol dehydrogenase, found in Escherichia coli (strain ATCC 8739 / DSM 1576 / NBRC 3972 / NCIMB 8545 / WDCM 00012 / Crooks).